We begin with the raw amino-acid sequence, 274 residues long: MEALRQRIEAAFEARAEITPTTVEPSVRADVEKVIAMLDTGEARVAEKIDGQWHVHQWLKKAVLLSFRIFDNQVIDGAETKYFDKVPMKFADYDEARFRKEAIRVVPPAAVRKGSFIGKNTVLMPSYVNLGAYVDEGTMVDTWATVGSCAQIGKNVHLSGGVGIGGVLEPLQAGPTIIEDNCFIGARSEVVEGVIVEEGSVISMGVYIGQSTRIYDRETGEVHYGRVPAGSVVVAGNLPSKCGTYSLYAAIIVKKVDEKTRGKVGINELLRIVD.

Residues Arg-104 and Asp-141 each contribute to the substrate site.

It belongs to the transferase hexapeptide repeat family. Homotrimer.

The protein resides in the cytoplasm. The catalysed reaction is (S)-2,3,4,5-tetrahydrodipicolinate + succinyl-CoA + H2O = (S)-2-succinylamino-6-oxoheptanedioate + CoA. Its pathway is amino-acid biosynthesis; L-lysine biosynthesis via DAP pathway; LL-2,6-diaminopimelate from (S)-tetrahydrodipicolinate (succinylase route): step 1/3. This Shewanella halifaxensis (strain HAW-EB4) protein is 2,3,4,5-tetrahydropyridine-2,6-dicarboxylate N-succinyltransferase.